A 154-amino-acid chain; its full sequence is Xanthine-guanine phosphoribosyltransferase (154 aa).

5-phospho-alpha-D-ribose 1-diphosphate is bound by residues 37–38 (RG), R69, and 88–96 (EDLVDSGDT). A GMP-binding site is contributed by R69. D89 contacts Mg(2+). Guanine is bound by residues D92 and I135. Residues D92 and I135 each contribute to the xanthine site. Residues 92–96 (DSGDT) and 134–135 (WI) each bind GMP.

Belongs to the purine/pyrimidine phosphoribosyltransferase family. XGPT subfamily. Homotetramer. Mg(2+) is required as a cofactor.

The protein localises to the cell inner membrane. It carries out the reaction GMP + diphosphate = guanine + 5-phospho-alpha-D-ribose 1-diphosphate. The enzyme catalyses XMP + diphosphate = xanthine + 5-phospho-alpha-D-ribose 1-diphosphate. It catalyses the reaction IMP + diphosphate = hypoxanthine + 5-phospho-alpha-D-ribose 1-diphosphate. The protein operates within purine metabolism; GMP biosynthesis via salvage pathway; GMP from guanine: step 1/1. Its pathway is purine metabolism; XMP biosynthesis via salvage pathway; XMP from xanthine: step 1/1. In terms of biological role, purine salvage pathway enzyme that catalyzes the transfer of the ribosyl-5-phosphate group from 5-phospho-alpha-D-ribose 1-diphosphate (PRPP) to the N9 position of the 6-oxopurines guanine and xanthine to form the corresponding ribonucleotides GMP (guanosine 5'-monophosphate) and XMP (xanthosine 5'-monophosphate), with the release of PPi. To a lesser extent, also acts on hypoxanthine. This is Xanthine-guanine phosphoribosyltransferase from Vibrio parahaemolyticus serotype O3:K6 (strain RIMD 2210633).